We begin with the raw amino-acid sequence, 249 residues long: Glutathione S-transferase S1 (249 aa).

Over residues 1 to 38 the composition is skewed to low complexity; that stretch reads MADEAQAPPAEGAPPAEGEAPPPAEGAEGAVEGGEAAP. The disordered stretch occupies residues 1–42; that stretch reads MADEAQAPPAEGAPPAEGEAPPPAEGAEGAVEGGEAAPPAEP. The 78-residue stretch at 48–125 folds into the GST N-terminal domain; that stretch reads HSYTLFYFNV…FLAKTVGLCG (78 aa). Glutathione-binding positions include Tyr-54, Trp-85, Lys-89, 96–97, and 109–110; these read QM and QS. Residues 127–249 enclose the GST C-terminal domain; that stretch reads TPWEDLQIDI…WIEKRPVTEV (123 aa).

The protein belongs to the GST superfamily. Sigma family. In terms of assembly, homodimer.

It catalyses the reaction RX + glutathione = an S-substituted glutathione + a halide anion + H(+). Functionally, conjugation of reduced glutathione to a wide number of exogenous and endogenous hydrophobic electrophiles. May be involved in the detoxification of metabolites produced during cellular division and morphogenesis. This Drosophila melanogaster (Fruit fly) protein is Glutathione S-transferase S1.